The sequence spans 361 residues: MSDVERTEFKLPEGMDLSSPPQRNQDVDAAEQQGEHDIERSLRPKSLDEFIGQPKVREQLSLVLNGAKNRGVTPDHVLLSGPPGLGKTTMAMIIAQELGSSLRMTSGPALERAGDLAAMLSNLMEGDVLFIDEIHRIARPAEEMLYMAMEDFRIDVIVGKGPGATSIPLEIPPFTLVGATTRAGMLTGPLRDRFGFTAQMEYYDTEDLTRVISRAARILEVDIDQDAAVEIGSRSRGTPRIANRLLRRVRDYAEVNGDGHIDVAAAQAALRVFDVDERGLDRLDRAVLGALIKGHGGGPVGVNTLAIAVGEEPSTVEEVCEPYLVRAGMISRTGRGRVATAAAWQHLGLEAPEGAIGGTLF.

2 stretches are compositionally biased toward basic and acidic residues: residues Met-1 to Glu-13 and Gln-33 to Arg-43. The disordered stretch occupies residues Met-1–Arg-43. The interval Ser-2 to Tyr-203 is large ATPase domain (RuvB-L). ATP contacts are provided by residues Leu-42, Arg-43, Gly-84, Lys-87, Thr-88, Thr-89, Glu-150 to Phe-152, Arg-193, Tyr-203, and Arg-240. Thr-88 contacts Mg(2+). Positions Asp-204 to Asp-274 are small ATPAse domain (RuvB-S). A head domain (RuvB-H) region spans residues Glu-277–Phe-361. Residues Arg-332 and Arg-337 each contribute to the DNA site.

This sequence belongs to the RuvB family. Homohexamer. Forms an RuvA(8)-RuvB(12)-Holliday junction (HJ) complex. HJ DNA is sandwiched between 2 RuvA tetramers; dsDNA enters through RuvA and exits via RuvB. An RuvB hexamer assembles on each DNA strand where it exits the tetramer. Each RuvB hexamer is contacted by two RuvA subunits (via domain III) on 2 adjacent RuvB subunits; this complex drives branch migration. In the full resolvosome a probable DNA-RuvA(4)-RuvB(12)-RuvC(2) complex forms which resolves the HJ.

The protein localises to the cytoplasm. It carries out the reaction ATP + H2O = ADP + phosphate + H(+). Functionally, the RuvA-RuvB-RuvC complex processes Holliday junction (HJ) DNA during genetic recombination and DNA repair, while the RuvA-RuvB complex plays an important role in the rescue of blocked DNA replication forks via replication fork reversal (RFR). RuvA specifically binds to HJ cruciform DNA, conferring on it an open structure. The RuvB hexamer acts as an ATP-dependent pump, pulling dsDNA into and through the RuvAB complex. RuvB forms 2 homohexamers on either side of HJ DNA bound by 1 or 2 RuvA tetramers; 4 subunits per hexamer contact DNA at a time. Coordinated motions by a converter formed by DNA-disengaged RuvB subunits stimulates ATP hydrolysis and nucleotide exchange. Immobilization of the converter enables RuvB to convert the ATP-contained energy into a lever motion, pulling 2 nucleotides of DNA out of the RuvA tetramer per ATP hydrolyzed, thus driving DNA branch migration. The RuvB motors rotate together with the DNA substrate, which together with the progressing nucleotide cycle form the mechanistic basis for DNA recombination by continuous HJ branch migration. Branch migration allows RuvC to scan DNA until it finds its consensus sequence, where it cleaves and resolves cruciform DNA. The polypeptide is Holliday junction branch migration complex subunit RuvB (Corynebacterium aurimucosum (strain ATCC 700975 / DSM 44827 / CIP 107346 / CN-1) (Corynebacterium nigricans)).